Here is a 146-residue protein sequence, read N- to C-terminus: Large ribosomal subunit protein uL13 (146 aa).

The protein belongs to the universal ribosomal protein uL13 family. In terms of assembly, part of the 50S ribosomal subunit.

Functionally, this protein is one of the early assembly proteins of the 50S ribosomal subunit, although it is not seen to bind rRNA by itself. It is important during the early stages of 50S assembly. The polypeptide is Large ribosomal subunit protein uL13 (Bdellovibrio bacteriovorus (strain ATCC 15356 / DSM 50701 / NCIMB 9529 / HD100)).